The chain runs to 347 residues: Protein RecA (347 aa).

66 to 73 (GPESSGKT) serves as a coordination point for ATP.

This sequence belongs to the RecA family.

The protein resides in the cytoplasm. Its function is as follows. Can catalyze the hydrolysis of ATP in the presence of single-stranded DNA, the ATP-dependent uptake of single-stranded DNA by duplex DNA, and the ATP-dependent hybridization of homologous single-stranded DNAs. It interacts with LexA causing its activation and leading to its autocatalytic cleavage. This chain is Protein RecA, found in Methylococcus capsulatus (strain ATCC 33009 / NCIMB 11132 / Bath).